A 248-amino-acid chain; its full sequence is DNA repair protein RecO (248 aa).

It belongs to the RecO family.

In terms of biological role, involved in DNA repair and RecF pathway recombination. In Bacillus cereus (strain B4264), this protein is DNA repair protein RecO.